The following is a 229-amino-acid chain: Lytic polysaccharide monooxygenase-like protein ham-7 (229 aa).

Residues Met1 to Ala17 form the signal peptide. A Cu(2+)-binding site is contributed by His18. 2 disulfide bridges follow: Cys47–Cys157 and Cys122–Cys178. Asn55, Asn98, Asn139, Asn174, and Asn180 each carry an N-linked (GlcNAc...) asparagine glycan. The GPI-anchor amidated serine moiety is linked to residue Ser206. Positions Ala207–Leu229 are cleaved as a propeptide — removed in mature form.

This sequence belongs to the X325 family. Cu(2+) serves as cofactor.

Its subcellular location is the cell membrane. In terms of biological role, lytic polysaccharide monooxygenase-like protein that has diverged to biological functions other than polysaccharide degradation since it does not perform oxidative cleavage of polysaccharides. Acts as the major cell wall sensor that regulates MAK-1-dependent hyphal anastomosis, the fusion of hyphal cells. May also act as a cell surface-bound protein that functions in the copper-accumulation pathway. In Neurospora crassa (strain ATCC 24698 / 74-OR23-1A / CBS 708.71 / DSM 1257 / FGSC 987), this protein is Lytic polysaccharide monooxygenase-like protein ham-7.